The primary structure comprises 344 residues: Cathepsin B-like cysteine proteinase 5 (344 aa).

The N-terminal stretch at 1–15 (MWKLSAILLVAAASA) is a signal peptide. A propeptide spanning residues 16-81 (VVIPGHREAP…DIVATEVSDA (66 aa)) is cleaved from the precursor. Cystine bridges form between Cys-95–Cys-124, Cys-107–Cys-154, Cys-143–Cys-213, Cys-144–Cys-150, Cys-183–Cys-217, and Cys-191–Cys-203. Residue Cys-110 is part of the active site. Catalysis depends on residues His-286 and Asn-306.

This sequence belongs to the peptidase C1 family.

This chain is Cathepsin B-like cysteine proteinase 5 (cpr-5), found in Caenorhabditis elegans.